Consider the following 302-residue polypeptide: MTNISLDKLVTESRNENTKNIDRVETLEMLKMINDEDKKVAEAVEKELIHIAKAVEKIGKAFLNGGRLIYVGAGTSGRLGVLDASECPPTYGVSYDLVRGIIAGGESAMFKAREGAEDSKKLCIKDLKNIDFSKNDILVGIAASGRTPYVIGGLEYANGIGATTISVTCNPESEMSKIANISIAPVVGPEAITGSTRMKAGTAQKMVLNMLSTGAMVKTGKVYGNLMVDLKATNEKLVERAKRIVMQATGAKREQVERILEETNFDVKLSIFMIESSLEKMKAKEILDKNKGYIVEAIKEIS.

Residues 58 to 221 (IGKAFLNGGR…STGAMVKTGK (164 aa)) form the SIS domain. The Proton donor role is filled by Glu86. Residue Glu117 is part of the active site.

Belongs to the GCKR-like family. MurNAc-6-P etherase subfamily. In terms of assembly, homodimer.

It catalyses the reaction N-acetyl-D-muramate 6-phosphate + H2O = N-acetyl-D-glucosamine 6-phosphate + (R)-lactate. Its pathway is amino-sugar metabolism; N-acetylmuramate degradation. In terms of biological role, specifically catalyzes the cleavage of the D-lactyl ether substituent of MurNAc 6-phosphate, producing GlcNAc 6-phosphate and D-lactate. The sequence is that of N-acetylmuramic acid 6-phosphate etherase from Clostridium botulinum (strain Loch Maree / Type A3).